The following is a 104-amino-acid chain: L-rhamnose mutarotase (104 aa).

Y18 is a binding site for substrate. Residue H22 is the Proton donor of the active site. Residues Y41 and 76-77 (WW) contribute to the substrate site.

Belongs to the rhamnose mutarotase family. As to quaternary structure, homodimer.

It localises to the cytoplasm. It catalyses the reaction alpha-L-rhamnose = beta-L-rhamnose. It participates in carbohydrate metabolism; L-rhamnose metabolism. Involved in the anomeric conversion of L-rhamnose. The polypeptide is L-rhamnose mutarotase (Enterobacter sp. (strain 638)).